We begin with the raw amino-acid sequence, 1139 residues long: DNA-directed RNA polymerase subunit beta (1139 aa).

A disordered region spans residues 1085–1139; the sequence is ADTSNRHTPSRPTYESVTSEDLSPSPAFTRVLRTADANASRSLEEDEDEEEEEDF. Polar residues predominate over residues 1086–1106; the sequence is DTSNRHTPSRPTYESVTSEDL. The span at 1128–1139 shows a compositional bias: acidic residues; it reads EEDEDEEEEEDF.

This sequence belongs to the RNA polymerase beta chain family. In terms of assembly, in cyanobacteria the RNAP catalytic core is composed of 2 alpha, 1 beta, 1 beta', 1 gamma and 1 omega subunit. When a sigma factor is associated with the core the holoenzyme is formed, which can initiate transcription.

The catalysed reaction is RNA(n) + a ribonucleoside 5'-triphosphate = RNA(n+1) + diphosphate. Its function is as follows. DNA-dependent RNA polymerase catalyzes the transcription of DNA into RNA using the four ribonucleoside triphosphates as substrates. This Synechococcus sp. (strain JA-2-3B'a(2-13)) (Cyanobacteria bacterium Yellowstone B-Prime) protein is DNA-directed RNA polymerase subunit beta.